Consider the following 89-residue polypeptide: Small ribosomal subunit protein uS15 (89 aa).

It belongs to the universal ribosomal protein uS15 family. Part of the 30S ribosomal subunit. Forms a bridge to the 50S subunit in the 70S ribosome, contacting the 23S rRNA.

One of the primary rRNA binding proteins, it binds directly to 16S rRNA where it helps nucleate assembly of the platform of the 30S subunit by binding and bridging several RNA helices of the 16S rRNA. Functionally, forms an intersubunit bridge (bridge B4) with the 23S rRNA of the 50S subunit in the ribosome. This chain is Small ribosomal subunit protein uS15, found in Syntrophomonas wolfei subsp. wolfei (strain DSM 2245B / Goettingen).